A 285-amino-acid polypeptide reads, in one-letter code: NAD kinase (285 aa).

Aspartate 67 acts as the Proton acceptor in catalysis. NAD(+) is bound by residues 67 to 68, 141 to 142, arginine 152, lysine 169, aspartate 171, 182 to 187, and glutamine 242; these read DG, ND, and TGYSLS.

Belongs to the NAD kinase family. A divalent metal cation is required as a cofactor.

It is found in the cytoplasm. The catalysed reaction is NAD(+) + ATP = ADP + NADP(+) + H(+). Involved in the regulation of the intracellular balance of NAD and NADP, and is a key enzyme in the biosynthesis of NADP. Catalyzes specifically the phosphorylation on 2'-hydroxyl of the adenosine moiety of NAD to yield NADP. The sequence is that of NAD kinase from Trichlorobacter lovleyi (strain ATCC BAA-1151 / DSM 17278 / SZ) (Geobacter lovleyi).